The following is a 265-amino-acid chain: Mlc titration factor A (265 aa).

Residues H111, H148, H152, and E211 each coordinate Zn(2+).

It belongs to the MtfA family. Interacts with Mlc. Requires Zn(2+) as cofactor.

It is found in the cytoplasm. Functionally, involved in the modulation of the activity of the glucose-phosphotransferase system (glucose-PTS). Interacts with the transcriptional repressor Mlc, preventing its interaction with DNA and leading to the modulation of expression of genes regulated by Mlc, including ptsG, which encodes the PTS system glucose-specific EIICB component. In terms of biological role, shows zinc-dependent metallopeptidase activity. This is Mlc titration factor A from Shigella sonnei (strain Ss046).